The primary structure comprises 265 residues: Putative 2-amino-3,7-dideoxy-D-threo-hept-6-ulosonate synthase 2 (265 aa).

Asp-27 (proton acceptor) is an active-site residue. Residues 27–31 and 147–149 contribute to the 1-deoxy-D-threo-hexo-2,5-diulose 6-phosphate site; these read DHGVS and YPR. Tyr-147 (proton donor) is an active-site residue. The active-site Schiff-base intermediate with substrate is Lys-177. 1-deoxy-D-threo-hexo-2,5-diulose 6-phosphate contacts are provided by residues 202-203 and 230-231; these read GG and GR.

The protein belongs to the DeoC/FbaB aldolase family. ADHS subfamily. Homodecamer.

It carries out the reaction 1-deoxy-D-threo-hexo-2,5-diulose 6-phosphate + L-aspartate 4-semialdehyde = 2,3-dioxopropyl phosphate + 2-amino-2,3,7-trideoxy-D-lyxo-hept-6-ulosonate. Functionally, catalyzes a transaldol reaction between 6-deoxy-5-ketofructose 1-phosphate (DKFP) and L-aspartate semialdehyde (ASA) with an elimination of hydroxypyruvaldehyde phosphate to yield 2-amino-3,7-dideoxy-D-threo-hept-6-ulosonate (ADH). Plays a key role in an alternative pathway of the biosynthesis of 3-dehydroquinate (DHQ), which is involved in the canonical pathway for the biosynthesis of aromatic amino acids. The sequence is that of Putative 2-amino-3,7-dideoxy-D-threo-hept-6-ulosonate synthase 2 from Archaeoglobus fulgidus (strain ATCC 49558 / DSM 4304 / JCM 9628 / NBRC 100126 / VC-16).